The chain runs to 1194 residues: DNA polymerase catalytic subunit (1194 aa).

This sequence belongs to the DNA polymerase type-B family. In terms of assembly, forms a complex with the ssDNA-binding protein, the DNA polymerase processivity factor, and the alkaline exonuclease. Interacts with the helicase-primase complex composed of the primase, the helicase and the primase-associated factor; this interaction may coordinate leading and lagging strand DNA synthesis at the replication fork.

The protein localises to the host nucleus. It carries out the reaction DNA(n) + a 2'-deoxyribonucleoside 5'-triphosphate = DNA(n+1) + diphosphate. The catalysed reaction is Endonucleolytic cleavage to 5'-phosphomonoester.. Replicates viral genomic DNA. The replication complex is composed of six viral proteins: the DNA polymerase, processivity factor, primase, primase-associated factor, helicase, and ssDNA-binding protein. Additionally, the polymerase contains an intrinsic ribonuclease H (RNase H) activity that specifically degrades RNA/DNA heteroduplexes or duplex DNA substrates in the 5' to 3' direction. Therefore, it can catalyze the excision of the RNA primers that initiate the synthesis of Okazaki fragments at a replication fork during viral DNA replication. The sequence is that of DNA polymerase catalytic subunit from Varicella-zoster virus (strain Oka vaccine) (HHV-3).